The primary structure comprises 638 residues: Threonine--tRNA ligase (638 aa).

In terms of domain architecture, TGS spans 1–61 (MPIITLPDGS…NKDSKVVIIT (61 aa)). The catalytic stretch occupies residues 242-533 (DHRKLGKKHS…LIEQYEAKFP (292 aa)). Zn(2+) is bound by residues Cys333, His384, and His510.

This sequence belongs to the class-II aminoacyl-tRNA synthetase family. As to quaternary structure, homodimer. The cofactor is Zn(2+).

The protein resides in the cytoplasm. It carries out the reaction tRNA(Thr) + L-threonine + ATP = L-threonyl-tRNA(Thr) + AMP + diphosphate + H(+). Catalyzes the attachment of threonine to tRNA(Thr) in a two-step reaction: L-threonine is first activated by ATP to form Thr-AMP and then transferred to the acceptor end of tRNA(Thr). Also edits incorrectly charged L-seryl-tRNA(Thr). The sequence is that of Threonine--tRNA ligase from Prochlorococcus marinus (strain AS9601).